A 2293-amino-acid chain; its full sequence is Protein Ycf2 B (2293 aa).

Gly1647–Ser1654 is a binding site for ATP.

This sequence belongs to the Ycf2 family.

It localises to the plastid. It is found in the chloroplast stroma. In terms of biological role, probable ATPase of unknown function. Its presence in a non-photosynthetic plant (Epifagus virginiana) and experiments in tobacco indicate that it has an essential function which is probably not related to photosynthesis. This chain is Protein Ycf2 B, found in Crucihimalaya wallichii (Rock-cress).